The following is a 78-amino-acid chain: Dihydrofolate reductase type 2 (78 aa).

NADP(+) is bound by residues Lys32 and 66 to 69 (VQIY). Substrate is bound at residue Ile68.

Homotetramer.

It catalyses the reaction (6S)-5,6,7,8-tetrahydrofolate + NADP(+) = 7,8-dihydrofolate + NADPH + H(+). It functions in the pathway cofactor biosynthesis; tetrahydrofolate biosynthesis; 5,6,7,8-tetrahydrofolate from 7,8-dihydrofolate: step 1/1. In terms of biological role, key enzyme in folate metabolism. Catalyzes an essential reaction for de novo glycine and purine synthesis, and for DNA precursor synthesis. The protein is Dihydrofolate reductase type 2 of Escherichia coli.